Reading from the N-terminus, the 728-residue chain is Lanosterol synthase (728 aa).

The stretch at 117-159 (RVEMIRYIVNTAHPVDGGWGLHSVDKSTCFGTTMNYVCLRLLG) is one PFTB 1 repeat. Asp-450 acts as the Proton donor in catalysis. PFTB repeat units follow at residues 561–602 (ISSA…HTVG) and 611–657 (VKKG…ALIG).

This sequence belongs to the terpene cyclase/mutase family.

The protein localises to the lipid droplet. The protein resides in the endoplasmic reticulum membrane. The enzyme catalyses (S)-2,3-epoxysqualene = lanosterol. It participates in terpene metabolism; lanosterol biosynthesis; lanosterol from farnesyl diphosphate: step 3/3. In terms of biological role, lanosterol synthase; part of the third module of ergosterol biosynthesis pathway that includes the late steps of the pathway. ERG7 catalyzes the cyclization of (S)-2,3 oxidosqualene to lanosterol, a reaction that forms the sterol core. The third module or late pathway involves the ergosterol synthesis itself through consecutive reactions that mainly occur in the endoplasmic reticulum (ER) membrane. Firstly, the squalene synthase ERG9 catalyzes the condensation of 2 farnesyl pyrophosphate moieties to form squalene, which is the precursor of all steroids. Squalene synthase is crucial for balancing the incorporation of farnesyl diphosphate (FPP) into sterol and nonsterol isoprene synthesis. Secondly, the squalene epoxidase ERG1 catalyzes the stereospecific oxidation of squalene to (S)-2,3-epoxysqualene, which is considered to be a rate-limiting enzyme in steroid biosynthesis. Then, the lanosterol synthase ERG7 catalyzes the cyclization of (S)-2,3 oxidosqualene to lanosterol, a reaction that forms the sterol core. In the next steps, lanosterol is transformed to zymosterol through a complex process involving various demethylation, reduction and desaturation reactions. The lanosterol 14-alpha-demethylase ERG11 (also known as CYP51) catalyzes C14-demethylation of lanosterol to produce 4,4'-dimethyl cholesta-8,14,24-triene-3-beta-ol, which is critical for ergosterol biosynthesis. The C-14 reductase ERG24 reduces the C14=C15 double bond of 4,4-dimethyl-cholesta-8,14,24-trienol to produce 4,4-dimethyl-cholesta-8,24-dienol. 4,4-dimethyl-cholesta-8,24-dienol is substrate of the C-4 demethylation complex ERG25-ERG26-ERG27 in which ERG25 catalyzes the three-step monooxygenation required for the demethylation of 4,4-dimethyl and 4alpha-methylsterols, ERG26 catalyzes the oxidative decarboxylation that results in a reduction of the 3-beta-hydroxy group at the C-3 carbon to an oxo group, and ERG27 is responsible for the reduction of the keto group on the C-3. ERG28 has a role as a scaffold to help anchor ERG25, ERG26 and ERG27 to the endoplasmic reticulum and ERG29 regulates the activity of the iron-containing C4-methylsterol oxidase ERG25. Then, the sterol 24-C-methyltransferase ERG6 catalyzes the methyl transfer from S-adenosyl-methionine to the C-24 of zymosterol to form fecosterol. The C-8 sterol isomerase ERG2 catalyzes the reaction which results in unsaturation at C-7 in the B ring of sterols and thus converts fecosterol to episterol. The sterol-C5-desaturase ERG3 then catalyzes the introduction of a C-5 double bond in the B ring to produce 5-dehydroepisterol. The C-22 sterol desaturase ERG5 further converts 5-dehydroepisterol into ergosta-5,7,22,24(28)-tetraen-3beta-ol by forming the C-22(23) double bond in the sterol side chain. Finally, ergosta-5,7,22,24(28)-tetraen-3beta-ol is substrate of the C-24(28) sterol reductase ERG4 to produce ergosterol. This Candida albicans (strain SC5314 / ATCC MYA-2876) (Yeast) protein is Lanosterol synthase.